We begin with the raw amino-acid sequence, 308 residues long: Aspartate carbamoyltransferase catalytic subunit (308 aa).

Residues R59 and T60 each contribute to the carbamoyl phosphate site. K87 lines the L-aspartate pocket. R109, H137, and Q140 together coordinate carbamoyl phosphate. L-aspartate contacts are provided by R173 and R224. G267 and P268 together coordinate carbamoyl phosphate.

This sequence belongs to the aspartate/ornithine carbamoyltransferase superfamily. ATCase family. Heterododecamer (2C3:3R2) of six catalytic PyrB chains organized as two trimers (C3), and six regulatory PyrI chains organized as three dimers (R2).

It catalyses the reaction carbamoyl phosphate + L-aspartate = N-carbamoyl-L-aspartate + phosphate + H(+). Its pathway is pyrimidine metabolism; UMP biosynthesis via de novo pathway; (S)-dihydroorotate from bicarbonate: step 2/3. In terms of biological role, catalyzes the condensation of carbamoyl phosphate and aspartate to form carbamoyl aspartate and inorganic phosphate, the committed step in the de novo pyrimidine nucleotide biosynthesis pathway. This chain is Aspartate carbamoyltransferase catalytic subunit, found in Helicobacter acinonychis (strain Sheeba).